A 322-amino-acid chain; its full sequence is Thiamine thiazole synthase (322 aa).

Substrate is bound by residues Cys-84, 105-106 (EA), Gly-113, and Val-178. A 2,3-didehydroalanine (Cys) modification is found at Cys-211. Residues Asp-213, His-228, Met-280, and 290–292 (RMG) each bind substrate.

Belongs to the THI4 family. Homooctamer. Fe cation is required as a cofactor. In terms of processing, during the catalytic reaction, a sulfide is transferred from Cys-211 to a reaction intermediate, generating a dehydroalanine residue.

Its subcellular location is the cytoplasm. It is found in the nucleus. It catalyses the reaction [ADP-thiazole synthase]-L-cysteine + glycine + NAD(+) = [ADP-thiazole synthase]-dehydroalanine + ADP-5-ethyl-4-methylthiazole-2-carboxylate + nicotinamide + 3 H2O + 2 H(+). Its function is as follows. Involved in biosynthesis of the thiamine precursor thiazole. Catalyzes the conversion of NAD and glycine to adenosine diphosphate 5-(2-hydroxyethyl)-4-methylthiazole-2-carboxylic acid (ADT), an adenylated thiazole intermediate. The reaction includes an iron-dependent sulfide transfer from a conserved cysteine residue of the protein to a thiazole intermediate. The enzyme can only undergo a single turnover, which suggests it is a suicide enzyme. May have additional roles in adaptation to various stress conditions and in DNA damage tolerance. The chain is Thiamine thiazole synthase from Fusarium vanettenii (strain ATCC MYA-4622 / CBS 123669 / FGSC 9596 / NRRL 45880 / 77-13-4) (Fusarium solani subsp. pisi).